The following is a 263-amino-acid chain: Lens fiber major intrinsic protein (263 aa).

The Cytoplasmic segment spans residues 1-9 (MWELRSASF). Residues 10–29 (WRAIFAEFFATLFYVFFGLG) form a helical membrane-spanning segment. Topologically, residues 30-41 (ASLRWAPGPLHV) are extracellular. A helical transmembrane segment spans residues 42 to 59 (LQVALAFGLALAXLVQTV). At 60–61 (GH) the chain is on the cytoplasmic side. The discontinuously helical intramembrane region spans 62-77 (ISGAHVNPAVTFXFLV). The NPA 1 signature appears at 68–70 (NPA). Over 78–82 (GSQMS) the chain is Cytoplasmic. The helical transmembrane segment at 83–106 (LLRAFCYMAAQLLGAVAGAAVLYS) threads the bilayer. The Extracellular segment spans residues 107 to 127 (VTPPAVRGNLALNTLHAGVSV). The chain crosses the membrane as a helical span at residues 128–148 (XQATTVEIFLTLQFVLCIFAT). At 149–156 (YDERRNGR) the chain is on the cytoplasmic side. A helical membrane pass occupies residues 157–175 (LGSVALAVGFSLTLGHLFG). The Extracellular portion of the chain corresponds to 176-178 (MYY). Positions 179–193 (TGAGMNPARSFAPAI) form an intramembrane region, discontinuously helical. The short motif at 184-186 (NPA) is the NPA 2 element. Over 194–200 (LTRNFTN) the chain is Extracellular. The helical transmembrane segment at 201–222 (HWVYWVGPIIGGGLGSLLYDFL) threads the bilayer. At 223–263 (LFPRLKSVSERLSILKGTRPSDNNGQPEGTGEPVELKTQAL) the chain is on the cytoplasmic side. The tract at residues 227–237 (LKSVSERLSIL) is interaction with CALM. Phosphoserine occurs at positions 235 and 243. The segment at 238–263 (KGTRPSDNNGQPEGTGEPVELKTQAL) is disordered. Asn245 and Asn246 each carry deamidated asparagine; by deterioration.

It belongs to the MIP/aquaporin (TC 1.A.8) family. As to quaternary structure, homotetramer; each monomer provides an independent water pore. Two homotetramers on opposing membranes can dimerize, forming a cell-cell junction. Interacts with CALM; the calcium-calmodulin/CALM complex interacts with the cytoplasmic domains of two aquaporins, leading to channel closure. Interacts with BFSP1 (via C-terminus); prevents calcium-dependent inhibition of the water channel activity. Subject to partial proteolytic cleavage in the eye lens core. Partial proteolysis promotes interactions between tetramers from adjoining membranes. In terms of processing, fatty acylated at Met-1 and Lys-238. The acyl modifications, in decreasing order of ion abundance, are: oleoyl (C18:1) &gt; palmitoyl (C16:0) &gt; stearoyl (C18:0) &gt; eicosenoyl (C20:1) &gt; dihomo-gamma-linolenoyl (C20:3) &gt; palmitoleoyl (C16:1) &gt; eicosadienoyl (C20:2). As to expression, detected in eye lens (at protein level).

The protein localises to the cell membrane. Its subcellular location is the cell junction. The enzyme catalyses H2O(in) = H2O(out). The water channel activity is inhibited by calcium through calmodulin/CALM. Aquaporins form homotetrameric transmembrane channels, with each monomer independently mediating water transport across the plasma membrane along its osmotic gradient. Specifically expressed in lens fiber cells, this aquaporin is crucial for maintaining lens water homeostasis and transparency. Beyond water permeability, it also acts as a cell-to-cell adhesion molecule, forming thin junctions between lens fiber cells that are essential for maintaining the ordered structure and transparency of the lens. The sequence is that of Lens fiber major intrinsic protein from Cavia porcellus (Guinea pig).